Consider the following 228-residue polypeptide: Ribose-5-phosphate isomerase A (228 aa).

Residues 32–35 (TGST), 85–88 (DGAD), and 98–101 (KGGG) contribute to the substrate site. Glutamate 107 (proton acceptor) is an active-site residue. Lysine 125 contacts substrate.

This sequence belongs to the ribose 5-phosphate isomerase family. Homodimer.

It catalyses the reaction aldehydo-D-ribose 5-phosphate = D-ribulose 5-phosphate. It functions in the pathway carbohydrate degradation; pentose phosphate pathway; D-ribose 5-phosphate from D-ribulose 5-phosphate (non-oxidative stage): step 1/1. Functionally, catalyzes the reversible conversion of ribose-5-phosphate to ribulose 5-phosphate. The protein is Ribose-5-phosphate isomerase A of Ralstonia nicotianae (strain ATCC BAA-1114 / GMI1000) (Ralstonia solanacearum).